The sequence spans 314 residues: Serine protease 46 (314 aa).

The region spanning 44-281 is the Peptidase S1 domain; sequence VVNGKAVEVG…FTQWIKRQIG (238 aa). Cysteines 69 and 85 form a disulfide. Residues histidine 84 and aspartate 130 each act as charge relay system in the active site. Intrachain disulfides connect cysteine 164–cysteine 239, cysteine 197–cysteine 219, and cysteine 229–cysteine 257. Serine 233 functions as the Charge relay system in the catalytic mechanism. Residues 293–313 traverse the membrane as a helical segment; sequence FLSPFILTGYILLVSLGSLWL.

Belongs to the peptidase S1 family.

Its subcellular location is the membrane. This chain is Serine protease 46 (Prss46), found in Mus musculus (Mouse).